The following is a 331-amino-acid chain: D-lactate/D-glycerate dehydrogenase (331 aa).

NAD(+) is bound by residues 154–155 (RI), Asp174, 205–206 (VP), Asn211, 232–234 (FAR), and Asp258. Residue Arg234 is part of the active site. The active site involves Glu263. Catalysis depends on His295, which acts as the Proton donor.

The protein belongs to the D-isomer specific 2-hydroxyacid dehydrogenase family. In terms of assembly, homodimer.

It carries out the reaction (R)-lactate + NAD(+) = pyruvate + NADH + H(+). The catalysed reaction is (R)-glycerate + NAD(+) = 3-hydroxypyruvate + NADH + H(+). Has both D-lactate and D-glycerate dehydrogenase activities. Equally active on pyruvate and hydroxypyruvate. This is D-lactate/D-glycerate dehydrogenase from Pediococcus acidilactici.